A 29-amino-acid chain; its full sequence is U20-ctenitoxin-Co1a (29 aa).

2 disulfides stabilise this stretch: Cys-3/Cys-16 and Cys-10/Cys-21.

Expressed by the venom gland.

The protein resides in the secreted. This is U20-ctenitoxin-Co1a from Ctenus ornatus (Brazilian spider).